Reading from the N-terminus, the 369-residue chain is Phosphoribosyl pyrophosphate synthase-associated protein 2 (369 aa).

Position 1 is an N-acetylmethionine (Met1). Ser219, Ser227, and Ser233 each carry phosphoserine.

It belongs to the ribose-phosphate pyrophosphokinase family. As to quaternary structure, binds to PRPS1 and PRPS2.

In terms of biological role, seems to play a negative regulatory role in 5-phosphoribose 1-diphosphate synthesis. This Bos taurus (Bovine) protein is Phosphoribosyl pyrophosphate synthase-associated protein 2 (PRPSAP2).